The following is a 113-amino-acid chain: Small ribosomal subunit protein bS6 (113 aa).

It belongs to the bacterial ribosomal protein bS6 family.

In terms of biological role, binds together with bS18 to 16S ribosomal RNA. The protein is Small ribosomal subunit protein bS6 of Buchnera aphidicola subsp. Schizaphis graminum (strain Sg).